We begin with the raw amino-acid sequence, 572 residues long: Urease subunit alpha (572 aa).

In terms of domain architecture, Urease spans 136-572 (GGIDTHIHWI…VPLAQRYFLF (437 aa)). Positions 141, 143, and 224 each coordinate Ni(2+). Lysine 224 bears the N6-carboxylysine mark. Position 226 (histidine 226) interacts with substrate. Ni(2+)-binding residues include histidine 253 and histidine 279. Histidine 327 (proton donor) is an active-site residue. Residue aspartate 367 participates in Ni(2+) binding.

Belongs to the metallo-dependent hydrolases superfamily. Urease alpha subunit family. In terms of assembly, heterotrimer of UreA (gamma), UreB (beta) and UreC (alpha) subunits. Three heterotrimers associate to form the active enzyme. Ni cation is required as a cofactor. Post-translationally, carboxylation allows a single lysine to coordinate two nickel ions.

It localises to the cytoplasm. The catalysed reaction is urea + 2 H2O + H(+) = hydrogencarbonate + 2 NH4(+). The protein operates within nitrogen metabolism; urea degradation; CO(2) and NH(3) from urea (urease route): step 1/1. The protein is Urease subunit alpha of Actinobacillus pleuropneumoniae serotype 3 (strain JL03).